The primary structure comprises 216 residues: MRLKPHEAQSYRKKALWVSWISIVVTLILAVAGFTVSFMRHSASAFGFAFDATLDVLSSIIVLWRYSNAAAVHSAHREYIACVILGVIFILSSLCILGKAIHDLATKLLPEVDDFLFSVSIVSGLMCVILAVAKFMLGRILTSRALITDGFNSMVGGIMGFSILISAEVFRHYPNVWYLDGTIGILIGLVIQAYGVKLLVDMIPRVRQTRNYERFE.

Over 1–15 (MRLKPHEAQSYRKKA) the chain is Cytoplasmic. Residues 16 to 36 (LWVSWISIVVTLILAVAGFTV) form a helical membrane-spanning segment. The Extracellular portion of the chain corresponds to 37–43 (SFMRHSA). Residues 44-64 (SAFGFAFDATLDVLSSIIVLW) form a helical membrane-spanning segment. Residues 65–77 (RYSNAAAVHSAHR) lie on the Cytoplasmic side of the membrane. The chain crosses the membrane as a helical span at residues 78 to 98 (EYIACVILGVIFILSSLCILG). Over 99 to 114 (KAIHDLATKLLPEVDD) the chain is Extracellular. The chain crosses the membrane as a helical span at residues 115–135 (FLFSVSIVSGLMCVILAVAKF). Residues 136 to 144 (MLGRILTSR) are Cytoplasmic-facing. The chain crosses the membrane as a helical span at residues 145–165 (ALITDGFNSMVGGIMGFSILI). At 166 to 182 (SAEVFRHYPNVWYLDGT) the chain is on the extracellular side. The helical transmembrane segment at 183–203 (IGILIGLVIQAYGVKLLVDMI) threads the bilayer. The Cytoplasmic segment spans residues 204–216 (PRVRQTRNYERFE).

The protein belongs to the TMEM163 family.

The protein resides in the cytoplasmic vesicle. Its subcellular location is the secretory vesicle. It is found in the synaptic vesicle membrane. It localises to the early endosome membrane. The protein localises to the late endosome membrane. The protein resides in the lysosome membrane. Its subcellular location is the cell membrane. The catalysed reaction is Zn(2+)(in) = Zn(2+)(out). Zinc ion transporter that mediates zinc efflux and plays a crucial role in intracellular zinc homeostasis. Binds the divalent cations Zn(2+), Ni(2+), and to a minor extent Cu(2+). Is a functional modulator of P2X purinoceptors, including P2RX1, P2RX3, P2RX4 and P2RX7. Plays a role in central nervous system development and is required for myelination, and survival and proliferation of oligodendrocytes. The chain is Transmembrane protein 163a from Danio rerio (Zebrafish).